Consider the following 391-residue polypeptide: Protein Wnt-2b (391 aa).

5 disulfide bridges follow: C107–C118, C158–C166, C168–C188, C237–C251, and C239–C246. N117 carries N-linked (GlcNAc...) asparagine glycosylation. S243 carries O-palmitoleoyl serine; by PORCN lipidation. The N-linked (GlcNAc...) asparagine glycan is linked to N283. 6 disulfides stabilise this stretch: C309/C340, C325/C335, C339/C379, C355/C370, C357/C367, and C362/C363.

Belongs to the Wnt family. Forms a soluble 1:1 complex with AFM; this prevents oligomerization and is required for prolonged biological activity. The complex with AFM may represent the physiological form in body fluids. Interacts with FZD4 and FZD5. Palmitoleoylation is required for efficient binding to frizzled receptors. Depalmitoleoylation leads to Wnt signaling pathway inhibition. In terms of tissue distribution, isoform 1 is expressed in adult heart, brain, placenta, lung, prostate, testis, ovary, small intestine and colon. In the adult brain, it is mainly found in the caudate nucleus, subthalamic nucleus and thalamus. Also detected in fetal brain, lung and kidney. Isoform 2 is expressed in fetal brain, fetal lung, fetal kidney, caudate nucleus, testis and cancer cell lines.

The protein resides in the secreted. It localises to the extracellular space. The protein localises to the extracellular matrix. Its function is as follows. Ligand for members of the frizzled family of seven transmembrane receptors. Functions in the canonical Wnt/beta-catenin signaling pathway. Plays a redundant role in embryonic lung development. This Homo sapiens (Human) protein is Protein Wnt-2b (WNT2B).